The primary structure comprises 218 residues: Glycerol-3-phosphate acyltransferase (218 aa).

5 helical membrane passes run 5–25 (ALGM…ILIC), 53–73 (LAAA…VWLA), 80–100 (PFYL…PVFF), 115–135 (IAAI…LTVL), and 138–158 (GYSS…VWWF).

It belongs to the PlsY family. As to quaternary structure, probably interacts with PlsX.

The protein localises to the cell inner membrane. The catalysed reaction is an acyl phosphate + sn-glycerol 3-phosphate = a 1-acyl-sn-glycero-3-phosphate + phosphate. The protein operates within lipid metabolism; phospholipid metabolism. Its function is as follows. Catalyzes the transfer of an acyl group from acyl-phosphate (acyl-PO(4)) to glycerol-3-phosphate (G3P) to form lysophosphatidic acid (LPA). This enzyme utilizes acyl-phosphate as fatty acyl donor, but not acyl-CoA or acyl-ACP. This Proteus mirabilis (strain HI4320) protein is Glycerol-3-phosphate acyltransferase.